Consider the following 371-residue polypeptide: 4-hydroxy-3-methylbut-2-en-1-yl diphosphate synthase (flavodoxin) (371 aa).

[4Fe-4S] cluster is bound by residues cysteine 268, cysteine 271, cysteine 303, and glutamate 310.

Belongs to the IspG family. It depends on [4Fe-4S] cluster as a cofactor.

It carries out the reaction (2E)-4-hydroxy-3-methylbut-2-enyl diphosphate + oxidized [flavodoxin] + H2O + 2 H(+) = 2-C-methyl-D-erythritol 2,4-cyclic diphosphate + reduced [flavodoxin]. The protein operates within isoprenoid biosynthesis; isopentenyl diphosphate biosynthesis via DXP pathway; isopentenyl diphosphate from 1-deoxy-D-xylulose 5-phosphate: step 5/6. Converts 2C-methyl-D-erythritol 2,4-cyclodiphosphate (ME-2,4cPP) into 1-hydroxy-2-methyl-2-(E)-butenyl 4-diphosphate. This is 4-hydroxy-3-methylbut-2-en-1-yl diphosphate synthase (flavodoxin) from Lysinibacillus sphaericus (strain C3-41).